We begin with the raw amino-acid sequence, 305 residues long: N-acyl-aromatic-L-amino acid amidohydrolase (carboxylate-forming) (305 aa).

Zn(2+)-binding residues include His-15 and Glu-18. Substrate-binding positions include Arg-57 and Asn-64–Arg-65. His-108 lines the Zn(2+) pocket. Substrate-binding residues include Glu-171 and Tyr-281.

This sequence belongs to the AspA/AstE family. Aspartoacylase subfamily. In terms of assembly, homotetramer. It depends on Zn(2+) as a cofactor.

It localises to the apical cell membrane. The protein localises to the cytoplasm. The enzyme catalyses an N-acyl-aromatic L-alpha-amino acid + H2O = an aromatic L-alpha-amino acid + a carboxylate. It catalyses the reaction an N-acetyl-L-cysteine-S-conjugate + H2O = an S-substituted L-cysteine + acetate. Functionally, plays an important role in deacetylating mercapturic acids in kidney proximal tubules. In Xenopus laevis (African clawed frog), this protein is N-acyl-aromatic-L-amino acid amidohydrolase (carboxylate-forming) (acy3).